The sequence spans 815 residues: Protein-glutamine gamma-glutamyltransferase K (815 aa).

A compositionally biased stretch (basic and acidic residues) spans 1–10 (MEGPRSDVGR). Disordered stretches follow at residues 1-48 (MEGP…SFWA) and 62-101 (DDWG…AAGD). Over residues 16-25 (WQPPTTPSPE) the composition is skewed to pro residues. Position 21 is a phosphothreonine (Thr21). A phosphoserine mark is found at Ser23, Ser71, Ser83, Ser91, and Ser94. Low complexity predominate over residues 66–78 (PEPSGSRSRGTSS). A compositionally biased stretch (basic and acidic residues) spans 79-91 (RGRDSRGGRRPES). Active-site residues include Cys376, His435, and Asp458. Asn498, Asp500, Glu547, and Glu552 together coordinate Ca(2+). Residues 791–815 (GSGFSDAGGDSRSGENIPMAYRGGA) form a disordered region. Ser803 is modified (phosphoserine).

It belongs to the transglutaminase superfamily. Transglutaminase family. As to quaternary structure, interacts with PLAAT4. Ca(2+) serves as cofactor. In terms of processing, tyrosine-phosphorylated. Post-translationally, palmitoylated. The membrane anchorage region possesses a cluster of five cysteines within which fatty acid(s) may become thioester-linked. It is subject to phorbol ester-stimulated phosphorylation and is hypersensitive to proteolysis, which releases the enzyme in a soluble form. As to expression, expressed in large amounts in epithelial tissues (lung, liver and kidney).

Its subcellular location is the membrane. It carries out the reaction L-glutaminyl-[protein] + L-lysyl-[protein] = [protein]-L-lysyl-N(6)-5-L-glutamyl-[protein] + NH4(+). Catalyzes the cross-linking of proteins and the conjugation of polyamines to proteins. Responsible for cross-linking epidermal proteins during formation of the stratum corneum. Involved in cell proliferation. The polypeptide is Protein-glutamine gamma-glutamyltransferase K (Tgm1) (Mus musculus (Mouse)).